A 294-amino-acid chain; its full sequence is ATP synthase gamma chain (294 aa).

This sequence belongs to the ATPase gamma chain family. F-type ATPases have 2 components, CF(1) - the catalytic core - and CF(0) - the membrane proton channel. CF(1) has five subunits: alpha(3), beta(3), gamma(1), delta(1), epsilon(1). CF(0) has three main subunits: a, b and c.

The protein localises to the cell inner membrane. Produces ATP from ADP in the presence of a proton gradient across the membrane. The gamma chain is believed to be important in regulating ATPase activity and the flow of protons through the CF(0) complex. The sequence is that of ATP synthase gamma chain from Nitrosomonas eutropha (strain DSM 101675 / C91 / Nm57).